The sequence spans 313 residues: NADH-ubiquinone oxidoreductase chain 1 (313 aa).

Transmembrane regions (helical) follow at residues 6-26 (IIII…FVSL), 31-51 (ILAL…ILTP), 62-82 (FIIF…IITA), 84-104 (CIFL…DTGF), 109-129 (MLCV…CFLF), 142-162 (MFFS…IYSL), 183-203 (FYIA…LDGL), 216-235 (LVAG…YSVL), 250-270 (LCFG…FGFF), and 286-306 (AFIL…LFTT).

It belongs to the complex I subunit 1 family.

It localises to the mitochondrion inner membrane. The catalysed reaction is a ubiquinone + NADH + 5 H(+)(in) = a ubiquinol + NAD(+) + 4 H(+)(out). Functionally, core subunit of the mitochondrial membrane respiratory chain NADH dehydrogenase (Complex I) that is believed to belong to the minimal assembly required for catalysis. Complex I functions in the transfer of electrons from NADH to the respiratory chain. The immediate electron acceptor for the enzyme is believed to be ubiquinone. The sequence is that of NADH-ubiquinone oxidoreductase chain 1 (ND1) from Leishmania tarentolae (Sauroleishmania tarentolae).